The following is a 300-amino-acid chain: uncharacterized protein (300 aa).

8 helical membrane-spanning segments follow: residues 13–35 (LLCIFSQCLFGILYLFSIWLQPL), 45–67 (MLTMIFGLLLILFPTIGCRSLLS), 80–102 (WVLFLLGTLDAGSQFWLFMWAPL), 106–128 (GINIAMGYFLFPLIMAVLGWAWL), 180–202 (IPALQGITLDIILISIPCFIYIL), 217–236 (YWLLLPALGIVSAISLSANL), 243–265 (PVSIFAVLSYIEPILLFLIAVFV), and 275–294 (YFTYVPIWLSLIVIGIEGLL).

Belongs to the EamA transporter family.

The protein resides in the cell membrane. This is an uncharacterized protein from Haemophilus influenzae (strain ATCC 51907 / DSM 11121 / KW20 / Rd).